The chain runs to 378 residues: Erythronate-4-phosphate dehydrogenase (378 aa).

Substrate is bound by residues Ser45 and Thr66. NAD(+) is bound by residues Asp146 and Thr175. Arg208 is a catalytic residue. An NAD(+)-binding site is contributed by Asp232. Glu237 is an active-site residue. His254 acts as the Proton donor in catalysis. Residue Gly257 participates in NAD(+) binding. Position 258 (Tyr258) interacts with substrate.

It belongs to the D-isomer specific 2-hydroxyacid dehydrogenase family. PdxB subfamily. As to quaternary structure, homodimer.

It is found in the cytoplasm. It catalyses the reaction 4-phospho-D-erythronate + NAD(+) = (R)-3-hydroxy-2-oxo-4-phosphooxybutanoate + NADH + H(+). It participates in cofactor biosynthesis; pyridoxine 5'-phosphate biosynthesis; pyridoxine 5'-phosphate from D-erythrose 4-phosphate: step 2/5. In terms of biological role, catalyzes the oxidation of erythronate-4-phosphate to 3-hydroxy-2-oxo-4-phosphonooxybutanoate. The sequence is that of Erythronate-4-phosphate dehydrogenase from Escherichia coli O81 (strain ED1a).